Consider the following 330-residue polypeptide: Clp protease adapter protein ClpF, chloroplastic (330 aa).

Residues 1-65 (MVQSQSLSTL…KSLKQRNLLR (65 aa)) constitute a chloroplast transit peptide. Residues 66–138 (VEARWPFQGG…VEEESIRLQE (73 aa)) are NTD, required for CLPS1-binding. 2 coiled-coil regions span residues 112-139 (NLEQYDIAQQLREKLTEVEEESIRLQEG) and 175-195 (AAKLRDEISKLEAESLAVSAK). The region spanning 153-188 (GISIIRLRADLQNAIDSEDYGLAAKLRDEISKLEAE) is the UVR domain. A yccV-like region spans residues 203-310 (EYAFRLGQKL…TAGDFIPVKQ (108 aa)).

As to quaternary structure, binds to CLPC1 and CLPC2. Interacts with ClpS1; this interaction stimulates their association with ClpC. Associates with the Clp substrate HEMA1 (GluTR). Expressed constitutively in photosynthetic tissues such as leaves, stems and flowers, and, at low levels, in siliques.

The protein localises to the plastid. It is found in the chloroplast. Its function is as follows. Clp protease adapter that facilitates CLPS1 recruitment to ClpC chaperones thus forming a binary adapter for selective substrate recognition and delivery to plastid Clp protease system (CLPC). The chain is Clp protease adapter protein ClpF, chloroplastic from Arabidopsis thaliana (Mouse-ear cress).